Here is a 411-residue protein sequence, read N- to C-terminus: Creatinase (411 aa).

His-240 is an active-site residue.

This sequence belongs to the peptidase M24 family. Creatinase subfamily. As to quaternary structure, homodimer.

It catalyses the reaction creatine + H2O = sarcosine + urea. The polypeptide is Creatinase (Bacillus sp. (strain B-0618)).